A 164-amino-acid polypeptide reads, in one-letter code: HTH-type transcriptional regulator IscR (164 aa).

Residues 2–131 (RLTSKGRYAV…NNITLAELVN (130 aa)) enclose the HTH rrf2-type domain. Positions 28 to 51 (LADISERQGISLSYLEQLFSRLRK) form a DNA-binding region, H-T-H motif. [2Fe-2S] cluster is bound by residues Cys-92, Cys-98, and Cys-104. The segment at 143 to 164 (NNDTRRTANGRPQETINVNLRA) is disordered. Positions 152 to 164 (GRPQETINVNLRA) are enriched in polar residues.

Requires [2Fe-2S] cluster as cofactor.

Regulates the transcription of several operons and genes involved in the biogenesis of Fe-S clusters and Fe-S-containing proteins. The protein is HTH-type transcriptional regulator IscR of Yersinia enterocolitica serotype O:8 / biotype 1B (strain NCTC 13174 / 8081).